The sequence spans 253 residues: Tetraspanin-11 (253 aa).

The next 4 membrane-spanning stretches (helical) occupy residues 19–39 (LLFI…AVGV), 63–83 (ILIF…GAVI), 90–110 (LSAY…AGVL), and 220–240 (LLLM…GMIL).

This sequence belongs to the tetraspanin (TM4SF) family.

The protein localises to the membrane. In Bos taurus (Bovine), this protein is Tetraspanin-11 (TSPAN11).